The chain runs to 796 residues: Choline transporter-like 2 (796 aa).

An N-linked (GlcNAc...) asparagine glycan is attached at Asn20. A helical transmembrane segment spans residues 35–55; it reads PCLLLFVLFLGGWAFIAQYAI. Asn209 and Asn284 each carry an N-linked (GlcNAc...) asparagine glycan. Transmembrane regions (helical) follow at residues 304-324, 332-352, 386-406, and 431-451; these read WSIVLVACFCTLVASLIYIAL, ILWFSIFGVLIGLLVGIYFSV, LYLSIFVGVCFVVILLLVIVL, and VFFPIFSWILFIAAIAFAIGV. Residues Asn488 and Asn520 are each glycosylated (N-linked (GlcNAc...) asparagine). The next 5 helical transmembrane spans lie at 542 to 562, 585 to 605, 626 to 648, 691 to 711, and 724 to 744; these read VFGFLWLSFFISAFSYMVLAS, FFQTAVYHLGTVAFGSLILAI, AVTRAILCCMRCFFWLLETFLKF, FLFFLSKLLLTAGAGASTYYF, and IAVPTTVVVIAAFLITSVFFG.

It belongs to the CTL (choline transporter-like) family.

The protein resides in the membrane. This is Choline transporter-like 2 from Drosophila melanogaster (Fruit fly).